We begin with the raw amino-acid sequence, 805 residues long: Zinc finger CCCH domain-containing protein 11B (805 aa).

2 C3H1-type zinc fingers span residues 2–29 (PNQGEDCYFFFYSTCTKGDSCPFRHCEA) and 31–57 (LGNETVCTLWQEGRCFRRVCRFRHMEI). 6 disordered regions span residues 140–194 (KVES…GLRV), 223–351 (KKMK…DKVN), 364–433 (MLLE…TCIK), 449–468 (IVASKGQSEEPAGKTKSMQE), 481–506 (KALRVQQSSESSTSSPSQHEATPGAR), and 715–805 (VTVP…PLEL). The span at 160-175 (ADDDEDDDDQFSEEGD) shows a compositional bias: acidic residues. The segment covering 364–390 (MLLERASQKHGESQTKLKTEGPSKTDD) has biased composition (basic and acidic residues). Polar residues predominate over residues 391–402 (STSGARSSSTIR). Residues 403–423 (IKTFSEVLAEEEHRQQEAERQ) adopt a coiled-coil conformation. Basic and acidic residues-rich tracts occupy residues 412-433 (EEEHRQQEAERQKSKKDTTCIK) and 455-468 (QSEEPAGKTKSMQE). 2 stretches are compositionally biased toward low complexity: residues 486–498 (QQSSESSTSSPSQ) and 730–749 (PPTQSSSDSSPPEVSGPSSS). Residues 750 to 763 (QMSMKTRRLSSAST) are compositionally biased toward polar residues. Acidic residues predominate over residues 789–805 (EIDLDPGKDEDDLPLEL).

May play a role in mRNA transport. The protein is Zinc finger CCCH domain-containing protein 11B of Homo sapiens (Human).